The primary structure comprises 482 residues: Glutamyl-tRNA(Gln) amidotransferase subunit A (482 aa).

Catalysis depends on charge relay system residues Lys-80 and Ser-159. Ser-183 (acyl-ester intermediate) is an active-site residue.

This sequence belongs to the amidase family. GatA subfamily. In terms of assembly, heterotrimer of A, B and C subunits.

It catalyses the reaction L-glutamyl-tRNA(Gln) + L-glutamine + ATP + H2O = L-glutaminyl-tRNA(Gln) + L-glutamate + ADP + phosphate + H(+). Functionally, allows the formation of correctly charged Gln-tRNA(Gln) through the transamidation of misacylated Glu-tRNA(Gln) in organisms which lack glutaminyl-tRNA synthetase. The reaction takes place in the presence of glutamine and ATP through an activated gamma-phospho-Glu-tRNA(Gln). The protein is Glutamyl-tRNA(Gln) amidotransferase subunit A of Neorickettsia sennetsu (strain ATCC VR-367 / Miyayama) (Ehrlichia sennetsu).